Consider the following 91-residue polypeptide: Small ribosomal subunit protein uS19 (91 aa).

It belongs to the universal ribosomal protein uS19 family.

In terms of biological role, protein S19 forms a complex with S13 that binds strongly to the 16S ribosomal RNA. In Pseudomonas putida (strain ATCC 700007 / DSM 6899 / JCM 31910 / BCRC 17059 / LMG 24140 / F1), this protein is Small ribosomal subunit protein uS19.